A 201-amino-acid chain; its full sequence is Ribosome maturation factor RimP (201 aa).

This sequence belongs to the RimP family.

It is found in the cytoplasm. Functionally, required for maturation of 30S ribosomal subunits. The sequence is that of Ribosome maturation factor RimP from Acidobacterium capsulatum (strain ATCC 51196 / DSM 11244 / BCRC 80197 / JCM 7670 / NBRC 15755 / NCIMB 13165 / 161).